A 138-amino-acid polypeptide reads, in one-letter code: Putative nickel-responsive regulator (138 aa).

The Ni(2+) site is built by His76, His87, His89, and Cys95.

The protein belongs to the transcriptional regulatory CopG/NikR family. The cofactor is Ni(2+).

Its function is as follows. Transcriptional regulator. This chain is Putative nickel-responsive regulator, found in Pseudomonas putida (strain W619).